Here is a 218-residue protein sequence, read N- to C-terminus: Phosphoglycolate phosphatase (218 aa).

The active-site Nucleophile is Asp7. Residues Asp7, Asp9, and Asp167 each coordinate Mg(2+).

This sequence belongs to the HAD-like hydrolase superfamily. CbbY/CbbZ/Gph/YieH family. The cofactor is Mg(2+).

It carries out the reaction 2-phosphoglycolate + H2O = glycolate + phosphate. Its pathway is organic acid metabolism; glycolate biosynthesis; glycolate from 2-phosphoglycolate: step 1/1. Functionally, specifically catalyzes the dephosphorylation of 2-phosphoglycolate. Is involved in the dissimilation of the intracellular 2-phosphoglycolate formed during the DNA repair of 3'-phosphoglycolate ends, a major class of DNA lesions induced by oxidative stress. The protein is Phosphoglycolate phosphatase of Cereibacter sphaeroides (strain ATCC 17025 / ATH 2.4.3) (Rhodobacter sphaeroides).